Here is a 242-residue protein sequence, read N- to C-terminus: D-proline reductase subunit gamma (242 aa).

U152 serves as the catalytic Nucleophile. Residue U152 is a non-standard amino acid, selenocysteine.

Consists of 3 subunits of 23, 26 and 45 kDa (alpha, gamma and beta respectively). The molecular weight of the complex is approximately 870 kDa, suggesting a decameric structure, if all 3 subunits are present in equal stoichiometry. This subunit is carbonylated in vitro on an unidentified residue.

Its subcellular location is the cytoplasm. The catalysed reaction is [PrdC protein]-Se-L-selenocysteinyl-S-L-cysteine + 5-aminopentanoate = [PrdC protein]-L-selenocysteine/L-cysteine + D-proline. D-proline reductase catalyzes the reductive cleavage of a C-N bond in D-proline resulting in the formation of 5-aminovalerate. The alpha subunit has been shown to bind D-proline, presumably via the pyruvoyl group. This chain is D-proline reductase subunit gamma (prdB), found in Acetoanaerobium sticklandii (strain ATCC 12662 / DSM 519 / JCM 1433 / CCUG 9281 / NCIMB 10654 / HF) (Clostridium sticklandii).